The chain runs to 131 residues: Holo-[acyl-carrier-protein] synthase (131 aa).

The Mg(2+) site is built by D8 and E59.

The protein belongs to the P-Pant transferase superfamily. AcpS family. Mg(2+) serves as cofactor.

It localises to the cytoplasm. It carries out the reaction apo-[ACP] + CoA = holo-[ACP] + adenosine 3',5'-bisphosphate + H(+). Its function is as follows. Transfers the 4'-phosphopantetheine moiety from coenzyme A to a Ser of acyl-carrier-protein. This is Holo-[acyl-carrier-protein] synthase from Orientia tsutsugamushi (strain Ikeda) (Rickettsia tsutsugamushi).